We begin with the raw amino-acid sequence, 406 residues long: Phosphopentomutase (406 aa).

The Mn(2+) site is built by Asp-10, Asp-305, His-310, Asp-346, His-347, and His-358.

Belongs to the phosphopentomutase family. Requires Mn(2+) as cofactor.

Its subcellular location is the cytoplasm. The catalysed reaction is 2-deoxy-alpha-D-ribose 1-phosphate = 2-deoxy-D-ribose 5-phosphate. The enzyme catalyses alpha-D-ribose 1-phosphate = D-ribose 5-phosphate. The protein operates within carbohydrate degradation; 2-deoxy-D-ribose 1-phosphate degradation; D-glyceraldehyde 3-phosphate and acetaldehyde from 2-deoxy-alpha-D-ribose 1-phosphate: step 1/2. Functionally, isomerase that catalyzes the conversion of deoxy-ribose 1-phosphate (dRib-1-P) and ribose 1-phosphate (Rib-1-P) to deoxy-ribose 5-phosphate (dRib-5-P) and ribose 5-phosphate (Rib-5-P), respectively. This Methylorubrum extorquens (strain PA1) (Methylobacterium extorquens) protein is Phosphopentomutase.